A 154-amino-acid chain; its full sequence is uncharacterized protein (154 aa).

The region spanning Ser13–Asn128 is the HotDog ACOT-type domain.

It belongs to the acyl coenzyme A hydrolase family.

This is an uncharacterized protein from Haemophilus influenzae (strain ATCC 51907 / DSM 11121 / KW20 / Rd).